A 132-amino-acid polypeptide reads, in one-letter code: Heat shock protein 15 homolog (132 aa).

Residues 11–73 (VRLDKWLWAA…DEREVRVLQV (63 aa)) enclose the S4 RNA-binding domain. Basic and acidic residues-rich tracts occupy residues 94-105 (LKKRAENSEARR) and 114-125 (PERRPDKQERRQ). A disordered region spans residues 94–132 (LKKRAENSEARRFNSQFAPSPERRPDKQERRQLIKVKQY).

The protein belongs to the HSP15 family.

In terms of biological role, may play an important role in binding of nucleic acid. More specific for RNA. This chain is Heat shock protein 15 homolog (hslR), found in Aeromonas salmonicida.